The chain runs to 379 residues: Chaperone protein DnaJ (379 aa).

One can recognise a J domain in the interval 6–71 (DYYEVLGVDK…QKRSRYDQFG (66 aa)). The CR-type zinc finger occupies 138–220 (GVEREINVSK…CNGKGRLRST (83 aa)). Zn(2+) contacts are provided by Cys151, Cys154, Cys168, Cys171, Cys194, Cys197, Cys208, and Cys211. 4 CXXCXGXG motif repeats span residues 151 to 158 (CSKCTGSG), 168 to 175 (CNHCNGTG), 194 to 201 (CDACKGEG), and 208 to 215 (CPACNGKG).

This sequence belongs to the DnaJ family. As to quaternary structure, homodimer. It depends on Zn(2+) as a cofactor.

It localises to the cytoplasm. In terms of biological role, participates actively in the response to hyperosmotic and heat shock by preventing the aggregation of stress-denatured proteins and by disaggregating proteins, also in an autonomous, DnaK-independent fashion. Unfolded proteins bind initially to DnaJ; upon interaction with the DnaJ-bound protein, DnaK hydrolyzes its bound ATP, resulting in the formation of a stable complex. GrpE releases ADP from DnaK; ATP binding to DnaK triggers the release of the substrate protein, thus completing the reaction cycle. Several rounds of ATP-dependent interactions between DnaJ, DnaK and GrpE are required for fully efficient folding. Also involved, together with DnaK and GrpE, in the DNA replication of plasmids through activation of initiation proteins. The sequence is that of Chaperone protein DnaJ from Ruminiclostridium cellulolyticum (strain ATCC 35319 / DSM 5812 / JCM 6584 / H10) (Clostridium cellulolyticum).